We begin with the raw amino-acid sequence, 166 residues long: Small ribosomal subunit protein uS5 (166 aa).

The region spanning 12–75 is the S5 DRBM domain; the sequence is YIEKLVQVNR…EAARRNMIQV (64 aa).

This sequence belongs to the universal ribosomal protein uS5 family. In terms of assembly, part of the 30S ribosomal subunit. Contacts proteins S4 and S8.

With S4 and S12 plays an important role in translational accuracy. Its function is as follows. Located at the back of the 30S subunit body where it stabilizes the conformation of the head with respect to the body. The protein is Small ribosomal subunit protein uS5 of Pseudomonas entomophila (strain L48).